Here is a 121-residue protein sequence, read N- to C-terminus: Immunoglobulin kappa variable 4-1 (121 aa).

The first 20 residues, 1–20 (MVLQTQVFISLLLWISGAYG), serve as a signal peptide directing secretion. Residues 21–43 (DIVMTQSPDSLAVSLGERATINC) form a framework-1 region. An Ig-like domain is found at 21-121 (DIVMTQSPDS…YYCQQYYSTP (101 aa)). Cysteines 43 and 114 form a disulfide. Residues 44–60 (KSSQSVLYSSNNKNYLA) are complementarity-determining-1. The tract at residues 61–75 (WYQQKPGQPPKLLIY) is framework-2. The complementarity-determining-2 stretch occupies residues 76 to 82 (WASTRES). The segment at 83–114 (GVPDRFSGSGSGTDFTLTISSLQAEDVAVYYC) is framework-3. Positions 115–121 (QQYYSTP) are complementarity-determining-3.

In terms of assembly, immunoglobulins are composed of two identical heavy chains and two identical light chains; disulfide-linked.

It localises to the secreted. The protein resides in the cell membrane. Its function is as follows. V segment of the variable domain of immunoglobulins light chain that participates in the antigen recognition. Immunoglobulins, also known as antibodies, are membrane-bound or secreted glycoproteins produced by B lymphocytes. In the recognition phase of humoral immunity, the membrane-bound immunoglobulins serve as receptors which, upon binding of a specific antigen, trigger the clonal expansion and differentiation of B lymphocytes into immunoglobulins-secreting plasma cells. Secreted immunoglobulins mediate the effector phase of humoral immunity, which results in the elimination of bound antigens. The antigen binding site is formed by the variable domain of one heavy chain, together with that of its associated light chain. Thus, each immunoglobulin has two antigen binding sites with remarkable affinity for a particular antigen. The variable domains are assembled by a process called V-(D)-J rearrangement and can then be subjected to somatic hypermutations which, after exposure to antigen and selection, allow affinity maturation for a particular antigen. This chain is Immunoglobulin kappa variable 4-1, found in Homo sapiens (Human).